The sequence spans 468 residues: Glutamate--tRNA ligase 2 (468 aa).

The 'HIGH' region signature appears at 13–23; that stretch reads PSPTGYLHIGG. Positions 241–245 match the 'KMSKS' region motif; it reads KLSKR. Lysine 244 lines the ATP pocket.

It belongs to the class-I aminoacyl-tRNA synthetase family. Glutamate--tRNA ligase type 1 subfamily. In terms of assembly, monomer.

The protein resides in the cytoplasm. The enzyme catalyses tRNA(Glu) + L-glutamate + ATP = L-glutamyl-tRNA(Glu) + AMP + diphosphate. Catalyzes the attachment of glutamate to tRNA(Glu) in a two-step reaction: glutamate is first activated by ATP to form Glu-AMP and then transferred to the acceptor end of tRNA(Glu). This is Glutamate--tRNA ligase 2 from Paracoccus denitrificans (strain Pd 1222).